Reading from the N-terminus, the 461-residue chain is ATP synthase subunit beta (461 aa).

Residue 151-158 (GGAGVGKT) participates in ATP binding.

The protein belongs to the ATPase alpha/beta chains family. In terms of assembly, F-type ATPases have 2 components, CF(1) - the catalytic core - and CF(0) - the membrane proton channel. CF(1) has five subunits: alpha(3), beta(3), gamma(1), delta(1), epsilon(1). CF(0) has three main subunits: a(1), b(2) and c(9-12). The alpha and beta chains form an alternating ring which encloses part of the gamma chain. CF(1) is attached to CF(0) by a central stalk formed by the gamma and epsilon chains, while a peripheral stalk is formed by the delta and b chains.

Its subcellular location is the cell inner membrane. It carries out the reaction ATP + H2O + 4 H(+)(in) = ADP + phosphate + 5 H(+)(out). In terms of biological role, produces ATP from ADP in the presence of a proton gradient across the membrane. The catalytic sites are hosted primarily by the beta subunits. This chain is ATP synthase subunit beta, found in Idiomarina loihiensis (strain ATCC BAA-735 / DSM 15497 / L2-TR).